The following is a 138-amino-acid chain: Large ribosomal subunit protein uL16 (138 aa).

The segment covering 1–13 has biased composition (basic residues); the sequence is MLQPKRRKYRKEQ. Residues 1 to 24 are disordered; the sequence is MLQPKRRKYRKEQKGRNTGKATRG.

This sequence belongs to the universal ribosomal protein uL16 family. In terms of assembly, part of the 50S ribosomal subunit.

In terms of biological role, binds 23S rRNA and is also seen to make contacts with the A and possibly P site tRNAs. The sequence is that of Large ribosomal subunit protein uL16 from Burkholderia lata (strain ATCC 17760 / DSM 23089 / LMG 22485 / NCIMB 9086 / R18194 / 383).